The primary structure comprises 387 residues: 3-dehydroquinate synthase (387 aa).

This sequence belongs to the archaeal-type DHQ synthase family.

It catalyses the reaction 2-amino-2,3,7-trideoxy-D-lyxo-hept-6-ulosonate + NAD(+) + H2O = 3-dehydroquinate + NH4(+) + NADH + H(+). In terms of biological role, catalyzes the oxidative deamination and cyclization of 2-amino-3,7-dideoxy-D-threo-hept-6-ulosonic acid (ADH) to yield 3-dehydroquinate (DHQ), which is fed into the canonical shikimic pathway of aromatic amino acid biosynthesis. The protein is 3-dehydroquinate synthase of Halobacterium salinarum (strain ATCC 29341 / DSM 671 / R1).